Here is a 149-residue protein sequence, read N- to C-terminus: Small ribosomal subunit protein bS18c (149 aa).

Residues 1 to 23 (MDKITGPFRKSKKSFRKPLPPIQ) form a disordered region.

This sequence belongs to the bacterial ribosomal protein bS18 family. Part of the 30S ribosomal subunit.

The protein localises to the plastid. The sequence is that of Small ribosomal subunit protein bS18c from Cuscuta obtusiflora (Peruvian dodder).